A 280-amino-acid chain; its full sequence is 4-diphosphocytidyl-2-C-methyl-D-erythritol kinase (280 aa).

Lys11 is an active-site residue. 95-105 lines the ATP pocket; that stretch reads PVGAGLGGGSS. Asp137 is an active-site residue.

Belongs to the GHMP kinase family. IspE subfamily.

The catalysed reaction is 4-CDP-2-C-methyl-D-erythritol + ATP = 4-CDP-2-C-methyl-D-erythritol 2-phosphate + ADP + H(+). The protein operates within isoprenoid biosynthesis; isopentenyl diphosphate biosynthesis via DXP pathway; isopentenyl diphosphate from 1-deoxy-D-xylulose 5-phosphate: step 3/6. Catalyzes the phosphorylation of the position 2 hydroxy group of 4-diphosphocytidyl-2C-methyl-D-erythritol. This is 4-diphosphocytidyl-2-C-methyl-D-erythritol kinase from Citrifermentans bemidjiense (strain ATCC BAA-1014 / DSM 16622 / JCM 12645 / Bem) (Geobacter bemidjiensis).